We begin with the raw amino-acid sequence, 24 residues long: Ascaphin-2 (24 aa).

In terms of tissue distribution, expressed by the skin glands.

The protein resides in the secreted. Antimicrobial peptide that shows higher potency against Gram-negative bacteria than against Gram-positive bacteria. Has a very week hemolytic activity. The chain is Ascaphin-2 from Ascaphus truei (Coastal tailed frog).